The primary structure comprises 805 residues: Transmembrane channel-like protein 6 (805 aa).

The tract at residues 1-29 (MAQPLAFILDVPETPGDQGQGPSPYDESE) is disordered. Residues 1–209 (MAQPLAFILD…SCCGRLRYAC (209 aa)) are Lumenal-facing. The residue at position 89 (threonine 89) is a Phosphothreonine. Residue arginine 94 is modified to Omega-N-methylarginine. Residue asparagine 103 is glycosylated (N-linked (GlcNAc...) asparagine). Phosphothreonine is present on threonine 105. The helical transmembrane segment at 210 to 230 (VLALHSLGLALLSALQALMPW) threads the bilayer. At 231 to 249 (RYALKRIGGQFGSSVLSYF) the chain is on the cytoplasmic side. The chain crosses the membrane as a helical span at residues 250–270 (LFLKTLLAFNALLLLLLVAFI). Over 271 to 338 (MGPQVAFPPA…TPRVGGLPYN (68 aa)) the chain is Lumenal. Asparagine 312 carries N-linked (GlcNAc...) asparagine glycosylation. The helical transmembrane segment at 339 to 359 (MPLAYLSTVGVSFFITCITLV) threads the bilayer. The Cytoplasmic segment spans residues 360–431 (YSMAHSFGES…RSVCGRLRQA (72 aa)). Residues 432–452 (AVLGLVWLLCLGTALGCAVAV) form a helical membrane-spanning segment. At 453-469 (HVFSEFMIQSPEAAGQE) the chain is on the lumenal side. A helical transmembrane segment spans residues 470 to 490 (AVLLVLPLVVGLLNLGAPYLC). At 491–505 (RVLAALEPHDSPVLE) the chain is on the cytoplasmic side. The helical transmembrane segment at 506–526 (VYVAICRNLILKLAILGTLCY) threads the bilayer. Residues 527–553 (HWLGRRVGVLQGQCWEDFVGQELYRFL) are Lumenal-facing. The helical transmembrane segment at 554-574 (VMDFVLMLLDTLFGELVWRII) threads the bilayer. Residues 575 to 604 (SEKKLKRRRKPEFDIARNVLELIYGQTLTW) are Cytoplasmic-facing. The helical transmembrane segment at 605–625 (LGVLFSPLLPAVQIIKLLLVF) threads the bilayer. Over 626–650 (YVKKTSLLANCQAPRRPWLASHMST) the chain is Lumenal. Residues 651-671 (VFLTLLCFPAFLGAAVFLCYA) form a helical membrane-spanning segment. Residues 672–722 (VWQVKPSSTCGPFRTLDTMYEAGRVWVRHLEAAGPRVSWLPWVHRYLMENT) lie on the Cytoplasmic side of the membrane. Residues 723 to 743 (FFVFLVSALLLAVIYLNIQVV) form a helical membrane-spanning segment. Over 744 to 805 (RGQRKVICLL…PALLTDEQDA (62 aa)) the chain is Lumenal. Positions 778-805 (KEREERSRVGTTEEAAAPPALLTDEQDA) are disordered.

This sequence belongs to the TMC family. Interacts with TMC8. Interacts and forms a complex with TMC8 and CIB1; the interaction stabilizes each component of the complex. Interacts and forms a complex with TMC8 and SLC30A1/ZNT1; the interaction regulates zinc transport into the ER. In terms of assembly, (Microbial infection) Interacts with human papillomavirus 16/HPV16 protein E5; the interaction alleviates TMC6-mediated transcription factors inhibition. Expressed in placenta, prostate, testis, activated T-lymphocytes and lymphokine-activated killer (LAK) lymphocytes.

The protein localises to the endoplasmic reticulum membrane. It is found in the golgi apparatus membrane. It localises to the nucleus membrane. Functionally, acts as a regulatory protein involved in the regulation of numerous cellular processes. Together with its homolog TMC8/EVER2, forms a complex with CIB1 in lymphocytes and keratynocytes where TMC6 and TMC8 stabilize CIB1 and reciprocally. Together with TMC8, also forms a complex with and activates zinc transporter ZNT1 at the ER membrane of keratynocytes, thereby facilitating zinc uptake into the ER. Down-regulates the activity of transcription factors induced by zinc and cytokines. Also plays a role in thermal sensation by inhibiting the M-channel (KCNQ2-KCNQ3 channel) current in primary sensory neurons. The chain is Transmembrane channel-like protein 6 from Homo sapiens (Human).